Consider the following 106-residue polypeptide: Small ribosomal subunit protein uS10 (106 aa).

Belongs to the universal ribosomal protein uS10 family. As to quaternary structure, part of the 30S ribosomal subunit.

Its function is as follows. Involved in the binding of tRNA to the ribosomes. This chain is Small ribosomal subunit protein uS10, found in Hyphomonas neptunium (strain ATCC 15444).